We begin with the raw amino-acid sequence, 122 residues long: Large ribosomal subunit protein uL14 (122 aa).

It belongs to the universal ribosomal protein uL14 family. In terms of assembly, part of the 50S ribosomal subunit. Forms a cluster with proteins L3 and L19. In the 70S ribosome, L14 and L19 interact and together make contacts with the 16S rRNA in bridges B5 and B8.

In terms of biological role, binds to 23S rRNA. Forms part of two intersubunit bridges in the 70S ribosome. The sequence is that of Large ribosomal subunit protein uL14 from Clavibacter michiganensis subsp. michiganensis (strain NCPPB 382).